Reading from the N-terminus, the 263-residue chain is Coiled-coil domain-containing protein 172 (263 aa).

Residues 13 to 191 (TEHQAEESRR…LKVLKDEETE (179 aa)) are a coiled coil.

The protein belongs to the CCDC172 family. As to quaternary structure, may interact with TEKT2. In terms of tissue distribution, detected in spermatozoa (at protein level). Predominantly expressed in testis and in spermatozoa from the caput and corpus epididymis.

It is found in the cytoplasm. It localises to the cell projection. The protein resides in the cilium. The chain is Coiled-coil domain-containing protein 172 (Ccdc172) from Rattus norvegicus (Rat).